The primary structure comprises 226 residues: MNDTDVQNQIQQMVRFMRQEAEEKANEISVSAEEEFNIEKLQLVEAEKKKIRQEYERKAKQVDVRRKIEYSMQLNASRIKVLQAQDDLVNAMKEAASKELLLVSGDHHQYRNLLKELIVQSLLRLKEPAVLLRCREEDKHHVHRVLHSAREEYGEKACVSHPEVIVDDIHLPPAPTSYDSHELSCSGGVVMASRDGKIVFENTLDARLEVAFRKKLPQIRKQLFAV.

It belongs to the V-ATPase E subunit family. V-ATPase is a heteromultimeric enzyme composed of a peripheral catalytic V1 complex (components A to H) attached to an integral membrane V0 proton pore complex (components: a, c, c', c'' and d).

Its function is as follows. Subunit of the peripheral V1 complex of vacuolar ATPase essential for assembly or catalytic function. V-ATPase is responsible for acidifying a variety of intracellular compartments in eukaryotic cells. In Mesembryanthemum crystallinum (Common ice plant), this protein is V-type proton ATPase subunit E (VATE).